A 311-amino-acid chain; its full sequence is Dermonecrotic toxin (311 aa).

An N-terminal signal peptide occupies residues 1 to 21 (MYVHLALILGCWTVVLQGAET). Positions 22–26 (DVGER) are excised as a propeptide. The active site involves H38. 2 residues coordinate Mg(2+): E58 and D60. H73 acts as the Nucleophile in catalysis. C77 and C83 form a disulfide bridge. D117 provides a ligand contact to Mg(2+).

The protein belongs to the arthropod phospholipase D family. Class I subfamily. It depends on Mg(2+) as a cofactor. In terms of tissue distribution, expressed by the venom gland.

The protein localises to the secreted. The enzyme catalyses an N-(acyl)-sphingosylphosphocholine = an N-(acyl)-sphingosyl-1,3-cyclic phosphate + choline. The catalysed reaction is an N-(acyl)-sphingosylphosphoethanolamine = an N-(acyl)-sphingosyl-1,3-cyclic phosphate + ethanolamine. It carries out the reaction a 1-acyl-sn-glycero-3-phosphocholine = a 1-acyl-sn-glycero-2,3-cyclic phosphate + choline. It catalyses the reaction a 1-acyl-sn-glycero-3-phosphoethanolamine = a 1-acyl-sn-glycero-2,3-cyclic phosphate + ethanolamine. Its activity is regulated as follows. Catalytic activity and hemolysis are inhibited by divalent ion chelators (1,10-phenanthroline, EDTA, and EGTA). In terms of biological role, dermonecrotic toxins cleave the phosphodiester linkage between the phosphate and headgroup of certain phospholipids (sphingolipid and lysolipid substrates), forming an alcohol (often choline) and a cyclic phosphate. This toxin acts on sphingomyelin (SM). It may also act on ceramide phosphoethanolamine (CPE), lysophosphatidylcholine (LPC) and lysophosphatidylethanolamine (LPE), but not on lysophosphatidylserine (LPS), and lysophosphatidylglycerol (LPG). It acts by transphosphatidylation, releasing exclusively cyclic phosphate products as second products. Shows complement-dependent hemolysis. Also induces dermonecrosis, vascular permeability, edema, inflammatory response, and platelet aggregation. In Loxosceles laeta (South American recluse spider), this protein is Dermonecrotic toxin.